Consider the following 286-residue polypeptide: Acetyl-coenzyme A carboxylase carboxyl transferase subunit beta (286 aa).

The CoA carboxyltransferase N-terminal domain maps to 23–286 (IWVKCNNCNQ…ITNKPEPKKE (264 aa)). Positions 27, 30, 46, and 49 each coordinate Zn(2+). The segment at 27–49 (CNNCNQMIYKIELEKNLEVCPKC) adopts a C4-type zinc-finger fold.

The protein belongs to the AccD/PCCB family. Acetyl-CoA carboxylase is a heterohexamer composed of biotin carboxyl carrier protein (AccB), biotin carboxylase (AccC) and two subunits each of ACCase subunit alpha (AccA) and ACCase subunit beta (AccD). Zn(2+) serves as cofactor.

Its subcellular location is the cytoplasm. The enzyme catalyses N(6)-carboxybiotinyl-L-lysyl-[protein] + acetyl-CoA = N(6)-biotinyl-L-lysyl-[protein] + malonyl-CoA. It functions in the pathway lipid metabolism; malonyl-CoA biosynthesis; malonyl-CoA from acetyl-CoA: step 1/1. Component of the acetyl coenzyme A carboxylase (ACC) complex. Biotin carboxylase (BC) catalyzes the carboxylation of biotin on its carrier protein (BCCP) and then the CO(2) group is transferred by the transcarboxylase to acetyl-CoA to form malonyl-CoA. In Wigglesworthia glossinidia brevipalpis, this protein is Acetyl-coenzyme A carboxylase carboxyl transferase subunit beta.